A 327-amino-acid chain; its full sequence is S-adenosylmethionine/S-adenosylhomocysteine transporter (327 aa).

A run of 10 helical transmembrane segments spans residues 22-42, 53-73, 85-105, 114-134, 143-163, 165-185, 202-222, 240-260, 271-291, and 294-314; these read CDMA…SFAL, LFVT…LLLC, IMPI…LEFI, TACF…YVQL, LGGL…GGSE, VAEW…ATCL, SLSM…LSLI, LFLQ…YNLF, FLSF…WLLL, and SFPP…RLIY. In terms of domain architecture, EamA 1 spans 34–157; the sequence is FIWSSSFALS…LGLVSYLVYL (124 aa). The region spanning 189–313 is the EamA 2 domain; sequence GWTLLRKLGR…GFMVLGCRLI (125 aa).

This sequence belongs to the drug/metabolite transporter (DMT) superfamily. 10 TMS drug/metabolite exporter (DME) (TC 2.A.7.3) family.

It localises to the cell membrane. Functionally, transports S-adenosylmethionine (SAM) and S-adenosylhomocysteine (SAH). Allows bacteria to acquire SAM from the eukaryotic host cell and to likely remove the toxic by-product SAH. The protein is S-adenosylmethionine/S-adenosylhomocysteine transporter of Chlamydia trachomatis serovar D (strain ATCC VR-885 / DSM 19411 / UW-3/Cx).